Here is a 444-residue protein sequence, read N- to C-terminus: Methylenetetrahydrofolate--tRNA-(uracil-5-)-methyltransferase TrmFO (444 aa).

10 to 15 (GAGLAG) lines the FAD pocket.

This sequence belongs to the MnmG family. TrmFO subfamily. FAD is required as a cofactor.

It localises to the cytoplasm. The catalysed reaction is uridine(54) in tRNA + (6R)-5,10-methylene-5,6,7,8-tetrahydrofolate + NADH + H(+) = 5-methyluridine(54) in tRNA + (6S)-5,6,7,8-tetrahydrofolate + NAD(+). The enzyme catalyses uridine(54) in tRNA + (6R)-5,10-methylene-5,6,7,8-tetrahydrofolate + NADPH + H(+) = 5-methyluridine(54) in tRNA + (6S)-5,6,7,8-tetrahydrofolate + NADP(+). In terms of biological role, catalyzes the folate-dependent formation of 5-methyl-uridine at position 54 (M-5-U54) in all tRNAs. This chain is Methylenetetrahydrofolate--tRNA-(uracil-5-)-methyltransferase TrmFO, found in Streptococcus uberis (strain ATCC BAA-854 / 0140J).